Consider the following 508-residue polypeptide: Photosystem II CP47 reaction center protein (508 aa).

The next 6 membrane-spanning stretches (helical) occupy residues 21 to 36 (AVHI…WAGS), 101 to 115 (IVFS…IWHW), 140 to 156 (GIHL…FGTF), 203 to 218 (IAAG…FHLS), 237 to 252 (VLSS…AFVV), and 457 to 472 (SFAL…HGAR).

The protein belongs to the PsbB/PsbC family. PsbB subfamily. As to quaternary structure, PSII is composed of 1 copy each of membrane proteins PsbA, PsbB, PsbC, PsbD, PsbE, PsbF, PsbH, PsbI, PsbJ, PsbK, PsbL, PsbM, PsbT, PsbX, PsbY, PsbZ, Psb30/Ycf12, at least 3 peripheral proteins of the oxygen-evolving complex and a large number of cofactors. It forms dimeric complexes. It depends on Binds multiple chlorophylls. PSII binds additional chlorophylls, carotenoids and specific lipids. as a cofactor.

The protein resides in the plastid. It localises to the chloroplast thylakoid membrane. Its function is as follows. One of the components of the core complex of photosystem II (PSII). It binds chlorophyll and helps catalyze the primary light-induced photochemical processes of PSII. PSII is a light-driven water:plastoquinone oxidoreductase, using light energy to abstract electrons from H(2)O, generating O(2) and a proton gradient subsequently used for ATP formation. This chain is Photosystem II CP47 reaction center protein, found in Citrus sinensis (Sweet orange).